The sequence spans 104 residues: Large ribosomal subunit protein uL24 (104 aa).

The protein belongs to the universal ribosomal protein uL24 family. In terms of assembly, part of the 50S ribosomal subunit.

Functionally, one of two assembly initiator proteins, it binds directly to the 5'-end of the 23S rRNA, where it nucleates assembly of the 50S subunit. One of the proteins that surrounds the polypeptide exit tunnel on the outside of the subunit. This is Large ribosomal subunit protein uL24 from Buchnera aphidicola subsp. Schizaphis graminum (strain Sg).